The sequence spans 275 residues: Bis(5'-nucleosyl)-tetraphosphatase, symmetrical (275 aa).

Belongs to the Ap4A hydrolase family.

It catalyses the reaction P(1),P(4)-bis(5'-adenosyl) tetraphosphate + H2O = 2 ADP + 2 H(+). Hydrolyzes diadenosine 5',5'''-P1,P4-tetraphosphate to yield ADP. The sequence is that of Bis(5'-nucleosyl)-tetraphosphatase, symmetrical from Marinomonas sp. (strain MWYL1).